Reading from the N-terminus, the 299-residue chain is MKVGIVLNPHAGGGFDDLKRRVVVRVLKKLDGEFVTADKVAELLGIEAERVKVKETNTRLDTVNLVKALDGNVDVIAVFGGDGTVSDAASAKPQTPLLCIGIGTTNVSPALCPPDFDRLEEVEMRGLVVKFGGEERVAFNDVVVGSTILSTVDGKRVQVDARRYMRGEKVIATPRKFRARVEVGERVVEGVFGNIFVAMTDRRFLGKGIAGGASLSAFLGFKGVVACVSEGIVVSTYTKEDLRRVEPIVTSTISFDDEVVKIDADEVVSCDGNPLGVGRAEVAIEDGVVRVLKPFKEEE.

This is an uncharacterized protein from Archaeoglobus fulgidus (strain ATCC 49558 / DSM 4304 / JCM 9628 / NBRC 100126 / VC-16).